The following is a 765-amino-acid chain: Probable serine/threonine-protein kinase DDB_G0271402 (765 aa).

Positions 35–328 (LEFGQEIGKG…KEITERLKSL (294 aa)) constitute a Protein kinase domain. Residues 41 to 49 (IGKGAYGKI) and K62 each bind ATP. Residue D192 is the Proton acceptor of the active site. Disordered regions lie at residues 371–393 (IVHN…NNSN), 443–477 (SMGD…KIIN), 491–527 (SSDL…NNNS), 545–620 (PIQI…QQYQ), 654–684 (PLNI…HHHL), 699–738 (IISS…PTNI), and 746–765 (ASNS…TVQS). Residues 446 to 458 (DESDLDSDDEDDS) are compositionally biased toward acidic residues. 5 stretches are compositionally biased toward low complexity: residues 459-470 (YTSSASSSRCNS), 499-527 (NGNN…NNNS), 562-605 (PPTS…PKSN), 662-678 (NNNN…GNVN), and 699-720 (IISS…SLTS).

The protein belongs to the protein kinase superfamily. TKL Ser/Thr protein kinase family.

It carries out the reaction L-seryl-[protein] + ATP = O-phospho-L-seryl-[protein] + ADP + H(+). It catalyses the reaction L-threonyl-[protein] + ATP = O-phospho-L-threonyl-[protein] + ADP + H(+). The polypeptide is Probable serine/threonine-protein kinase DDB_G0271402 (Dictyostelium discoideum (Social amoeba)).